A 109-amino-acid polypeptide reads, in one-letter code: UPF0154 protein UPA3_0273 (109 aa).

Residues 42-62 traverse the membrane as a helical segment; that stretch reads VGLGIGIVLFLIAGLIIGYFI.

Belongs to the UPF0154 family.

It localises to the cell membrane. The polypeptide is UPF0154 protein UPA3_0273 (Ureaplasma parvum serovar 3 (strain ATCC 27815 / 27 / NCTC 11736)).